We begin with the raw amino-acid sequence, 358 residues long: MVASFSWRLLSPRFLGGFVLGAAASSASCVAALQLYDKREPELAPVAPEEKDPLEEYGFPLTGTEARQYINHALAYDPAKRTPKWVIEHLSRTKTVGSADRKHCKFKPDPNIPKMFSATNEDYLGSGWTRGHMAPAGDNKFSTEAMAETFYLSNIVPQNYENNAGFWNRMEMYCRDLTKRFEDVWVVSGPLELPTSHEDGKKRVTYEVIGADEVAVPSHLYKVILVREKGSEQPLAIGAFVVPNSPIGFDHQLPEYKVQLEDLEKMSGLLFFPQLDRDKGLKPLCDVDSCRLIQLHEFKLYIAARRVGGARNLQKLERILSELKEEGITPDGYLLDLYEKKRKEFSLKSGTDRDERKG.

His-132 (proton acceptor) is an active-site residue. Residue Asn-163 participates in a divalent metal cation binding.

It belongs to the DNA/RNA non-specific endonuclease family. As to quaternary structure, homodimer. The cofactor is a divalent metal cation.

The protein localises to the mitochondrion inner membrane. Functionally, endo/exonuclease with nicking activity towards supercoiled DNA, a preference for single-stranded DNA and 5'-3' exonuclease activity. This chain is Nuclease EXOG, mitochondrial (exog), found in Xenopus laevis (African clawed frog).